The chain runs to 165 residues: uncharacterized protein (165 aa).

This is an uncharacterized protein from Homo sapiens (Human).